The chain runs to 259 residues: Ribosomal RNA small subunit methyltransferase A (259 aa).

Positions 13, 15, 40, 61, 85, and 103 each coordinate S-adenosyl-L-methionine.

The protein belongs to the class I-like SAM-binding methyltransferase superfamily. rRNA adenine N(6)-methyltransferase family. RsmA subfamily.

It is found in the cytoplasm. It carries out the reaction adenosine(1518)/adenosine(1519) in 16S rRNA + 4 S-adenosyl-L-methionine = N(6)-dimethyladenosine(1518)/N(6)-dimethyladenosine(1519) in 16S rRNA + 4 S-adenosyl-L-homocysteine + 4 H(+). Functionally, specifically dimethylates two adjacent adenosines (A1518 and A1519) in the loop of a conserved hairpin near the 3'-end of 16S rRNA in the 30S particle. May play a critical role in biogenesis of 30S subunits. The chain is Ribosomal RNA small subunit methyltransferase A from Neisseria meningitidis serogroup C / serotype 2a (strain ATCC 700532 / DSM 15464 / FAM18).